We begin with the raw amino-acid sequence, 312 residues long: Ribonuclease HIII (312 aa).

An RNase H type-2 domain is found at 95–311 (FNCIGSDEAG…REKAQKILKP (217 aa)). The a divalent metal cation site is built by D101, E102, and D206.

Belongs to the RNase HII family. RnhC subfamily. Mn(2+) is required as a cofactor. Mg(2+) serves as cofactor.

It localises to the cytoplasm. It catalyses the reaction Endonucleolytic cleavage to 5'-phosphomonoester.. Functionally, endonuclease that specifically degrades the RNA of RNA-DNA hybrids. This is Ribonuclease HIII from Staphylococcus aureus (strain MSSA476).